Reading from the N-terminus, the 467-residue chain is Cruzipain (467 aa).

The signal sequence occupies residues 1–18; sequence MSGWARALLLAAVLVVMA. Positions 19–122 are cleaved as a propeptide — activation peptide; the sequence is CLVPAATASL…RVPVKVEVVG (104 aa). 3 cysteine pairs are disulfide-bonded: C144/C185, C178/C223, and C277/C325. The active site involves C147. A glycan (N-linked (GlcNAc...) asparagine) is linked at N169. The active site involves H284. N292 is a glycosylation site (N-linked (GlcNAc...) asparagine). The active site involves N304. Residues 333-355 are disordered; sequence SAVVGGPGPTPEPTTTTTTSAPG. Low complexity predominate over residues 345–354; sequence PTTTTTTSAP. Residue N377 is glycosylated (N-linked (GlcNAc...) asparagine).

It belongs to the peptidase C1 family.

The catalysed reaction is Broad endopeptidase specificity similar to that of cathepsin L.. With respect to regulation, strongly inhibited by E-64 (L-trans-epoxysuccinylleucylamido(4-guanidino)butane), Leupeptin, and N-alpha-p-tosyl-L-lysine chloromethyl ketone. Functionally, hydrolyzes chromogenic peptides at the carboxyl Arg or Lys; requires at least one more amino acid, preferably Arg, Phe, Val or Leu, between the terminal Arg or Lys and the amino-blocking group. Its function is as follows. The cysteine protease may play an important role in the development and differentiation of the parasites at several stages of their life cycle. The sequence is that of Cruzipain from Trypanosoma cruzi.